The sequence spans 686 residues: Translation initiation factor IF-2 (686 aa).

The segment at 54–105 (KPSVADEFEVEEKVVRSKKNSNKKKKKGKGNEDKRQENFAGRQQTQTVETPD) is disordered. Residues 69–81 (RSKKNSNKKKKKG) are compositionally biased toward basic residues. Positions 188-357 (ERPAVVTIMG…LLVSEVEEYK (170 aa)) constitute a tr-type G domain. A G1 region spans residues 197-204 (GHVDHGKT). 197–204 (GHVDHGKT) serves as a coordination point for GTP. The G2 stretch occupies residues 222-226 (GITQH). Positions 243-246 (DTPG) are G3. GTP is bound by residues 243 to 247 (DTPGH) and 297 to 300 (NKMD). Residues 297–300 (NKMD) form a G4 region. The segment at 333–335 (SAI) is G5.

This sequence belongs to the TRAFAC class translation factor GTPase superfamily. Classic translation factor GTPase family. IF-2 subfamily.

It is found in the cytoplasm. Its function is as follows. One of the essential components for the initiation of protein synthesis. Protects formylmethionyl-tRNA from spontaneous hydrolysis and promotes its binding to the 30S ribosomal subunits. Also involved in the hydrolysis of GTP during the formation of the 70S ribosomal complex. In Bacillus cereus (strain 03BB102), this protein is Translation initiation factor IF-2.